Reading from the N-terminus, the 150-residue chain is Propanediol utilization protein PduV (150 aa).

The interval 1–42 is targets protein to the BMC; that stretch reads MKRIMLIGPSQCGKTSLTQCMRGEALHYQKTQAIVWSPTTID. 8 to 15 is a binding site for GTP; sequence GPSQCGKT.

It belongs to the EutP/PduV family. In terms of assembly, interacts with PduU, probably via the PduU beta-barrel which is predicted by modeling to be on the exterior of the BMC.

The protein localises to the bacterial microcompartment. It functions in the pathway polyol metabolism; 1,2-propanediol degradation. In terms of biological role, may play a role in the spatial distribution of the bacterial microcompartment (BMC) dedicated to 1,2-PD degradation, perhaps being involved in cytoskeleton dynamics; might bind GTP. This subunit is directly targeted to the BMC. Its function is as follows. Expression of a cosmid containing the full 21-gene pdu operon in E.coli allows E.coli to grow on 1,2-propanediol (1,2-PD) with the appearance of bacterial microcompartments (BMC) in its cytoplasm. Functionally, the 1,2-PD-specific bacterial microcompartment (BMC) concentrates low levels of 1,2-PD catabolic enzymes, concentrates volatile reaction intermediates thus enhancing pathway flux and keeps the level of toxic, mutagenic propionaldehyde low. The sequence is that of Propanediol utilization protein PduV from Citrobacter freundii.